Reading from the N-terminus, the 583-residue chain is Poly [ADP-ribose] polymerase 2 (583 aa).

The tract at residues 1–77 (MAARRRRSTG…GMPGRSWASK (77 aa)) is disordered. The segment at 1–103 (MAARRRRSTG…VDPECTAKVG (103 aa)) is N-terminal region (NTR). 2 consecutive short sequence motifs (nuclear localization signal) follow at residues 21 to 22 (KR) and 35 to 40 (PAKKTR). N6-acetyllysine occurs at positions 37 and 38. Over residues 57–67 (ANKDRTEDKQD) the composition is skewed to basic and acidic residues. The 98-residue stretch at 104 to 201 (KAHVYCEGND…EKFEKVPGKY (98 aa)) folds into the WGR domain. A phosphoserine mark is found at Ser-226 and Ser-232. Residues 231–348 (ESQLDLRVQE…DIEIAIKLVK (118 aa)) form the PARP alpha-helical domain. Residues 356-583 (HPLDQHYRNL…KVQFNFLQLW (228 aa)) enclose the PARP catalytic domain. Residues 428-430 (HGS), Gly-437, Arg-444, and Ser-470 contribute to the NAD(+) site. Catalysis depends on Glu-558, which acts as the For poly [ADP-ribose] polymerase activity.

Belongs to the ARTD/PARP family. As to quaternary structure, component of a base excision repair (BER) complex, containing at least XRCC1, PARP1, POLB and LRIG3. Homo- and heterodimer with PARP1. Interacts (via the PARP catalytic domain) with HPF1. Interacts with core nucleosomes. Auto poly-ADP-ribosylated on serine residues, leading to dissociation of the PARP2-HPF1 complex from chromatin. Poly-ADP-ribosylated by PARP1. Post-translationally, acetylation reduces DNA binding and enzymatic activity. In terms of processing, proteolytically cleaved by caspase-8 (CASP8) in response to apoptosis, leading to its inactivation. In terms of tissue distribution, widely expressed, mainly in actively dividing tissues. The highest levels are in the brain, heart, pancreas, skeletal muscle and testis; also detected in kidney, liver, lung, placenta, ovary and spleen; levels are low in leukocytes, colon, small intestine, prostate and thymus.

It is found in the nucleus. The protein resides in the chromosome. It catalyses the reaction NAD(+) + (ADP-D-ribosyl)n-acceptor = nicotinamide + (ADP-D-ribosyl)n+1-acceptor + H(+).. It carries out the reaction L-seryl-[protein] + NAD(+) = O-(ADP-D-ribosyl)-L-seryl-[protein] + nicotinamide + H(+). The catalysed reaction is L-aspartyl-[protein] + NAD(+) = 4-O-(ADP-D-ribosyl)-L-aspartyl-[protein] + nicotinamide. The enzyme catalyses L-glutamyl-[protein] + NAD(+) = 5-O-(ADP-D-ribosyl)-L-glutamyl-[protein] + nicotinamide. ADP-ribosyltransferase activity is regulated via an allosteric activation mechanism. In absence of activation signal, PARP2 is autoinhibited by the PARP alpha-helical domain (also named HD region), which prevents effective NAD(+)-binding. Activity is highly stimulated by signals, which unfold the PARP alpha-helical domain, relieving autoinhibition. Poly-ADP-ribosyltransferase activity is tightly regulated and PARP2 is removed from damaged chromatin following initial poly-ADP-ribosylation of chromatin to avoid prolonged residence (trapping) that has cytotoxic consequences. CHD1L promotes PARP2 removal from chromatin. ADP-ribosyltransferase activity is inhibited by a number of PARP inhibitors (PARPi) compounds, that are used the treatment of breast or ovarian cancers that have defects in DNA repair by homologous recombination. PARPi molecules (niraparib, talazoparib, and, to a lesser extent, olaparib) also trap PARP2 at DNA damage sites. Poly-ADP-ribosyltransferase that mediates poly-ADP-ribosylation of proteins and plays a key role in DNA repair. Mediates glutamate, aspartate or serine ADP-ribosylation of proteins: the ADP-D-ribosyl group of NAD(+) is transferred to the acceptor carboxyl group of target residues and further ADP-ribosyl groups are transferred to the 2'-position of the terminal adenosine moiety, building up a polymer with an average chain length of 20-30 units. Serine ADP-ribosylation of proteins constitutes the primary form of ADP-ribosylation of proteins in response to DNA damage. Mediates glutamate and aspartate ADP-ribosylation of target proteins in absence of HPF1. Following interaction with HPF1, catalyzes serine ADP-ribosylation of target proteins; HPF1 conferring serine specificity by completing the PARP2 active site. PARP2 initiates the repair of double-strand DNA breaks: recognizes and binds DNA breaks within chromatin and recruits HPF1, licensing serine ADP-ribosylation of target proteins, such as histones, thereby promoting decompaction of chromatin and the recruitment of repair factors leading to the reparation of DNA strand breaks. HPF1 initiates serine ADP-ribosylation but restricts the polymerase activity of PARP2 in order to limit the length of poly-ADP-ribose chains. Specifically mediates formation of branched poly-ADP-ribosylation. Branched poly-ADP-ribose chains are specifically recognized by some factors, such as APLF. In addition to proteins, also able to ADP-ribosylate DNA: preferentially acts on 5'-terminal phosphates at DNA strand breaks termini in nicked duplex. The chain is Poly [ADP-ribose] polymerase 2 from Homo sapiens (Human).